The sequence spans 192 residues: E3 ubiquitin-protein ligase RNF185 (192 aa).

Residues 1 to 13 (MASKGPSASASTE) are compositionally biased toward polar residues. Residues 1-30 (MASKGPSASASTENSNAGGPSGSSNGTGES) form a disordered region. Over 1–130 (MASKGPSASA…GGFQGFGFGD (130 aa)) the chain is Cytoplasmic. Low complexity predominate over residues 14–27 (NSNAGGPSGSSNGT). The required for ubiquitin ligase activity and protection against ER stress-induced cell death stretch occupies residues 29 to 80 (ESGGQDSTFECNICLDTAKDAVISLCGHLFCWPCLHQWLETRPNRQVCPVCK). The segment at 39–80 (CNICLDTAKDAVISLCGHLFCWPCLHQWLETRPNRQVCPVCK) adopts an RING-type zinc-finger fold. The tract at residues 90–123 (PLYGRGSTGQQDPREKTPPRPQGQRPEPENRGGF) is disordered. The chain crosses the membrane as a helical span at residues 131-151 (GGFQMSFGIGAFPFGIFATAF). Topologically, residues 152–171 (NINDGRPPPAVPGTPQYVDE) are mitochondrial intermembrane. A helical transmembrane segment spans residues 172 to 192 (QFLSRLFLFVALVIMFWLLIA).

As to quaternary structure, interacts with ATG5 and BNIP1. In terms of tissue distribution, ubiquitously expressed with high expression in testis.

The protein resides in the mitochondrion outer membrane. Its subcellular location is the endoplasmic reticulum membrane. The enzyme catalyses S-ubiquitinyl-[E2 ubiquitin-conjugating enzyme]-L-cysteine + [acceptor protein]-L-lysine = [E2 ubiquitin-conjugating enzyme]-L-cysteine + N(6)-ubiquitinyl-[acceptor protein]-L-lysine.. It functions in the pathway protein modification; protein ubiquitination. E3 ubiquitin-protein ligase that regulates selective mitochondrial autophagy by mediating 'Lys-63'-linked polyubiquitination of BNIP1. Acts in the endoplasmic reticulum (ER)-associated degradation (ERAD) pathway, which targets misfolded proteins that accumulate in the endoplasmic reticulum (ER) for ubiquitination and subsequent proteasome-mediated degradation. Protects cells from ER stress-induced apoptosis. Responsible for the cotranslational ubiquitination and degradation of CFTR in the ERAD pathway. Also acts as a regulator of the innate antiviral response by catalyzing 'Lys-27'-linked polyubiquitination of CGAS, thereby promoting CGAS cyclic GMP-AMP synthase activity. Preferentially associates with the E2 enzymes UBE2J1 and UBE2J2. This is E3 ubiquitin-protein ligase RNF185 (Rnf185) from Mus musculus (Mouse).